The sequence spans 1004 residues: Bifunctional glutamine synthetase adenylyltransferase/adenylyl-removing enzyme (1004 aa).

Residues 1–497 (MCCTTVVVVR…LHAKLFYQPL (497 aa)) are adenylyl removase. The adenylyl transferase stretch occupies residues 502 to 1004 (GPASLEIRHG…KTFVRKVFGS (503 aa)).

The protein belongs to the GlnE family. The cofactor is Mg(2+).

The catalysed reaction is [glutamine synthetase]-O(4)-(5'-adenylyl)-L-tyrosine + phosphate = [glutamine synthetase]-L-tyrosine + ADP. The enzyme catalyses [glutamine synthetase]-L-tyrosine + ATP = [glutamine synthetase]-O(4)-(5'-adenylyl)-L-tyrosine + diphosphate. Functionally, involved in the regulation of glutamine synthetase GlnA, a key enzyme in the process to assimilate ammonia. When cellular nitrogen levels are high, the C-terminal adenylyl transferase (AT) inactivates GlnA by covalent transfer of an adenylyl group from ATP to specific tyrosine residue of GlnA, thus reducing its activity. Conversely, when nitrogen levels are low, the N-terminal adenylyl removase (AR) activates GlnA by removing the adenylyl group by phosphorolysis, increasing its activity. The regulatory region of GlnE binds the signal transduction protein PII (GlnB) which indicates the nitrogen status of the cell. The chain is Bifunctional glutamine synthetase adenylyltransferase/adenylyl-removing enzyme from Mycobacterium leprae (strain TN).